A 157-amino-acid chain; its full sequence is Ciliary microtubule inner protein 5 (157 aa).

2 disordered regions span residues 1–57 (MGSR…SALG) and 92–124 (DPMGNKKEPVKLPDHVPRFSDTVPNSTNRAVGS). The span at 92 to 109 (DPMGNKKEPVKLPDHVPR) shows a compositional bias: basic and acidic residues.

It localises to the cell projection. It is found in the cilium. The protein is Ciliary microtubule inner protein 5 (CIMIP5) of Bos taurus (Bovine).